We begin with the raw amino-acid sequence, 311 residues long: Ribose-5-phosphate isomerase (311 aa).

Over residues 22-32 (AGGAASGGGGN) the composition is skewed to gly residues. The disordered stretch occupies residues 22–67 (AGGAASGGGGNSWDLPGSHVRLPGRAQSGTRGGAGNTSTSCGDSNS). Position 52 is an omega-N-methylarginine (Arg52). Positions 57-67 (NTSTSCGDSNS) are enriched in polar residues. Ser106 carries the phosphoserine modification.

The protein belongs to the ribose 5-phosphate isomerase family.

It carries out the reaction aldehydo-D-ribose 5-phosphate = D-ribulose 5-phosphate. It participates in carbohydrate degradation; pentose phosphate pathway; D-ribose 5-phosphate from D-ribulose 5-phosphate (non-oxidative stage): step 1/1. Its function is as follows. Catalyzes the reversible conversion of ribose-5-phosphate to ribulose 5-phosphate and participates in the first step of the non-oxidative branch of the pentose phosphate pathway. In Homo sapiens (Human), this protein is Ribose-5-phosphate isomerase.